A 220-amino-acid chain; its full sequence is Claudin-24 (220 aa).

Residues 1–10 are Cytoplasmic-facing; sequence MALIFRTAMQ. The chain crosses the membrane as a helical span at residues 11-31; sequence SVGLLLSLLGWILSIITTYLP. Residues 32–81 are Extracellular-facing; the sequence is HWKNLNLDLNEMENWTMGLWQTCVIQEEVGMQCKDFDSFLALPAELRVSR. The helical transmembrane segment at 82–102 threads the bilayer; that stretch reads ILMFLSNGLGFLGLLVSGFGL. The Cytoplasmic segment spans residues 103-117; the sequence is DCLRIGESQRDLKRR. Residues 118–138 traverse the membrane as a helical segment; the sequence is LLILGGILSWASGITALVPVS. Over 139 to 161 the chain is Extracellular; the sequence is WVAHKTVQEFWDENVPDFVPRWE. Residues 162–182 form a helical membrane-spanning segment; that stretch reads FGEALFLGWFAGLSLLLGGCL. Topologically, residues 183–220 are cytoplasmic; that stretch reads LNCAACSSHAPLALGHYAVAQMQTQCPYLEDGTADPQV.

It belongs to the claudin family.

It localises to the cell junction. The protein resides in the tight junction. It is found in the cell membrane. Plays a major role in tight junction-specific obliteration of the intercellular space, through calcium-independent cell-adhesion activity. This is Claudin-24 from Homo sapiens (Human).